The following is a 103-amino-acid chain: PTS system lactose-specific EIIA component (103 aa).

A PTS EIIA type-3 domain is found at 1–102 (MNREEVQLLG…MKHLLEFYKR (102 aa)). Histidine 78 serves as the catalytic Tele-phosphohistidine intermediate. Position 78 is a phosphohistidine; by HPr (histidine 78). Aspartate 81 serves as a coordination point for Mg(2+).

As to quaternary structure, homotrimer. The cofactor is Mg(2+).

Its subcellular location is the cytoplasm. Its function is as follows. The phosphoenolpyruvate-dependent sugar phosphotransferase system (sugar PTS), a major carbohydrate active transport system, catalyzes the phosphorylation of incoming sugar substrates concomitantly with their translocation across the cell membrane. The enzyme II LacEF PTS system is involved in lactose transport. The protein is PTS system lactose-specific EIIA component of Staphylococcus aureus (strain COL).